A 516-amino-acid chain; its full sequence is 2-isopropylmalate synthase (516 aa).

One can recognise a Pyruvate carboxyltransferase domain in the interval 5-267 (IIIFDTTLRD…STDINIKEIH (263 aa)). Mn(2+) is bound by residues Asp-14, His-202, His-204, and Asn-238. Residues 393–516 (KLEYFDVQSK…VNKELERLQK (124 aa)) are regulatory domain.

The protein belongs to the alpha-IPM synthase/homocitrate synthase family. LeuA type 1 subfamily. In terms of assembly, homodimer. Mn(2+) is required as a cofactor.

Its subcellular location is the cytoplasm. It catalyses the reaction 3-methyl-2-oxobutanoate + acetyl-CoA + H2O = (2S)-2-isopropylmalate + CoA + H(+). Its pathway is amino-acid biosynthesis; L-leucine biosynthesis; L-leucine from 3-methyl-2-oxobutanoate: step 1/4. In terms of biological role, catalyzes the condensation of the acetyl group of acetyl-CoA with 3-methyl-2-oxobutanoate (2-ketoisovalerate) to form 3-carboxy-3-hydroxy-4-methylpentanoate (2-isopropylmalate). The chain is 2-isopropylmalate synthase from Buchnera aphidicola subsp. Cinara cedri (strain Cc).